The sequence spans 309 residues: MSIRIIPQDELGSSEKRTADMIPPLLFPRLKNVYNRRAERLRELAENNPLGDYLRFAALIAHAQEVVLYDHPLRMDLTARIKDANDQGKPPLDIHVLPRDKHWHTLLHSMIAELKPEMSGPALAVIENLEKASEQELEQMASALFASDFASVSSDKAPLIWAALSLYWAQMASLIPGKARAEYGEARQYCPVCGSMPVSSMVQIGTTQGLRYLHCNLCETEWHVVRVKCSNCEQSRDLHYWSLENEQAAVKAESCGDCGTYLKILYQEKDPKVEAVADDLASLVLDARMEQEGFARSSINPFLFPGEGE.

The protein belongs to the FdhE family.

The protein localises to the cytoplasm. In terms of biological role, necessary for formate dehydrogenase activity. The protein is Protein FdhE of Salmonella dublin (strain CT_02021853).